A 559-amino-acid chain; its full sequence is 5'-AMP-activated protein kinase catalytic subunit alpha-1 (559 aa).

The Protein kinase domain occupies 27-279 (YILGDTLGVG…IKDIREHEWF (253 aa)). Threonine 32 carries the post-translational modification Phosphothreonine. Residues 33–41 (LGVGTFGKV) and lysine 56 each bind ATP. The active-site Proton acceptor is aspartate 150. At threonine 183 the chain carries Phosphothreonine; by LKB1 and CaMKK2. Residues 302-381 (EALKEVCEKF…PERVPFLVAE (80 aa)) form an AIS region. Phosphothreonine is present on threonine 355. Serine 356 is subject to Phosphoserine. Serine 360 carries the phosphoserine; by ULK1 modification. Threonine 368 bears the Phosphothreonine; by ULK1 mark. Threonine 382 is modified (phosphothreonine). A Phosphoserine; by ULK1 modification is found at serine 397. Phosphoserine is present on residues serine 467 and serine 486. Positions 485–505 (KSGTATPQRSGSISNYRSCQR) are enriched in polar residues. Residues 485–536 (KSGTATPQRSGSISNYRSCQRSDSDAEAQGKPSDVSLTSSVTSLDSSPVDVA) form a disordered region. The residue at position 488 (threonine 488) is a Phosphothreonine; by ULK1. Threonine 490 is subject to Phosphothreonine. Serine 496, serine 508, serine 524, and serine 527 each carry phosphoserine. A compositionally biased stretch (low complexity) spans 516-535 (PSDVSLTSSVTSLDSSPVDV).

This sequence belongs to the protein kinase superfamily. CAMK Ser/Thr protein kinase family. SNF1 subfamily. As to quaternary structure, AMPK is a heterotrimer of an alpha catalytic subunit (PRKAA1 or PRKAA2), a beta (PRKAB1 or PRKAB2) and a gamma non-catalytic subunits (PRKAG1, PRKAG2 or PRKAG3). Interacts with FNIP1 and FNIP2. It depends on Mg(2+) as a cofactor. Post-translationally, phosphorylated at Thr-183 by STK11/LKB1 in complex with STE20-related adapter-alpha (STRADA) pseudo kinase and CAB39. Also phosphorylated at Thr-183 by CAMKK2; triggered by a rise in intracellular calcium ions, without detectable changes in the AMP/ATP ratio. CAMKK1 can also phosphorylate Thr-183, but at a much lower level. Dephosphorylated by protein phosphatase 2A and 2C (PP2A and PP2C). Phosphorylated by ULK1 and ULK2; leading to negatively regulate AMPK activity and suggesting the existence of a regulatory feedback loop between ULK1, ULK2 and AMPK. Dephosphorylated by PPM1A and PPM1B. In terms of processing, ubiquitinated. Glycosylated; O-GlcNAcylated by OGT, promoting the AMP-activated protein kinase (AMPK) activity.

It is found in the cytoplasm. It localises to the nucleus. The enzyme catalyses L-seryl-[protein] + ATP = O-phospho-L-seryl-[protein] + ADP + H(+). It carries out the reaction L-threonyl-[protein] + ATP = O-phospho-L-threonyl-[protein] + ADP + H(+). The catalysed reaction is L-seryl-[acetyl-CoA carboxylase] + ATP = O-phospho-L-seryl-[acetyl-CoA carboxylase] + ADP + H(+). It catalyses the reaction L-seryl-[3-hydroxy-3-methylglutaryl-coenzyme A reductase] + ATP = O-phospho-L-seryl-[3-hydroxy-3-methylglutaryl-coenzyme A reductase] + ADP + H(+). The enzyme catalyses L-seryl-[tau protein] + ATP = O-phospho-L-seryl-[tau protein] + ADP + H(+). It carries out the reaction L-threonyl-[tau protein] + ATP = O-phospho-L-threonyl-[tau protein] + ADP + H(+). Activated by phosphorylation on Thr-183. Binding of AMP to non-catalytic gamma subunit (PRKAG1, PRKAG2 or PRKAG3) results in allosteric activation, inducing phosphorylation on Thr-183. AMP-binding to gamma subunit also sustains activity by preventing dephosphorylation of Thr-183. ADP also stimulates Thr-183 phosphorylation, without stimulating already phosphorylated AMPK. ATP promotes dephosphorylation of Thr-183, rendering the enzyme inactive. Under physiological conditions AMPK mainly exists in its inactive form in complex with ATP, which is much more abundant than AMP. Selectively inhibited by compound C (6-[4-(2-Piperidin-1-yl-ethoxy)-phenyl)]-3-pyridin-4-yl-pyyrazolo[1,5-a] pyrimidine. Activated by resveratrol, a natural polyphenol present in red wine, and S17834, a synthetic polyphenol. Functionally, catalytic subunit of AMP-activated protein kinase (AMPK), an energy sensor protein kinase that plays a key role in regulating cellular energy metabolism. In response to reduction of intracellular ATP levels, AMPK activates energy-producing pathways and inhibits energy-consuming processes: inhibits protein, carbohydrate and lipid biosynthesis, as well as cell growth and proliferation. AMPK acts via direct phosphorylation of metabolic enzymes, and by longer-term effects via phosphorylation of transcription regulators. Regulates lipid synthesis by phosphorylating and inactivating lipid metabolic enzymes such as ACACA, ACACB, GYS1, HMGCR and LIPE; regulates fatty acid and cholesterol synthesis by phosphorylating acetyl-CoA carboxylase (ACACA and ACACB) and hormone-sensitive lipase (LIPE) enzymes, respectively. Promotes lipolysis of lipid droplets by mediating phosphorylation of isoform 1 of CHKA (CHKalpha2). Regulates insulin-signaling and glycolysis by phosphorylating IRS1, PFKFB2 and PFKFB3. AMPK stimulates glucose uptake in muscle by increasing the translocation of the glucose transporter SLC2A4/GLUT4 to the plasma membrane, possibly by mediating phosphorylation of TBC1D4/AS160. Regulates transcription and chromatin structure by phosphorylating transcription regulators involved in energy metabolism such as CRTC2/TORC2, FOXO3, histone H2B, HDAC5, MEF2C, MLXIPL/ChREBP, EP300, HNF4A, p53/TP53, SREBF1, SREBF2 and PPARGC1A. Acts as a key regulator of glucose homeostasis in liver by phosphorylating CRTC2/TORC2, leading to CRTC2/TORC2 sequestration in the cytoplasm. In response to stress, phosphorylates 'Ser-36' of histone H2B (H2BS36ph), leading to promote transcription. Acts as a key regulator of cell growth and proliferation by phosphorylating FNIP1, TSC2, RPTOR, WDR24 and ATG1/ULK1: in response to nutrient limitation, negatively regulates the mTORC1 complex by phosphorylating RPTOR component of the mTORC1 complex and by phosphorylating and activating TSC2. Also phosphorylates and inhibits GATOR2 subunit WDR24 in response to nutrient limitation, leading to suppress glucose-mediated mTORC1 activation. In response to energetic stress, phosphorylates FNIP1, inactivating the non-canonical mTORC1 signaling, thereby promoting nuclear translocation of TFEB and TFE3, and inducing transcription of lysosomal or autophagy genes. In response to nutrient limitation, promotes autophagy by phosphorylating and activating ATG1/ULK1. In that process, it also activates WDR45/WIPI4. Phosphorylates CASP6, thereby preventing its autoprocessing and subsequent activation. In response to nutrient limitation, phosphorylates transcription factor FOXO3 promoting FOXO3 mitochondrial import. Also acts as a regulator of cellular polarity by remodeling the actin cytoskeleton; probably by indirectly activating myosin. AMPK also acts as a regulator of circadian rhythm by mediating phosphorylation of CRY1, leading to destabilize it. May regulate the Wnt signaling pathway by phosphorylating CTNNB1, leading to stabilize it. Also has tau-protein kinase activity: in response to amyloid beta A4 protein (APP) exposure, activated by CAMKK2, leading to phosphorylation of MAPT/TAU; however the relevance of such data remains unclear in vivo. Also phosphorylates CFTR, EEF2K, KLC1, NOS3 and SLC12A1. Regulates hepatic lipogenesis. Activated via SIRT3, represses sterol regulatory element-binding protein (SREBP) transcriptional activities and ATP-consuming lipogenesis to restore cellular energy balance. Upon stress, regulates mitochondrial fragmentation through phosphorylation of MTFR1L. The chain is 5'-AMP-activated protein kinase catalytic subunit alpha-1 (Prkaa1) from Mus musculus (Mouse).